A 300-amino-acid chain; its full sequence is MHDLPDTDFTQRFIFDESDVRGELVALERSYAEVLAKHPYPEPVAQLLGELMAAAALLVGTLKFDGLLILQARSSGAVPLLMVECSSERELRGIARYDETLITPDAGLQDLMPDGSLALTVDPHKGKRYQGIVALDGVDLSESLSNYFVMSEQLGTRFWLKADGHRARGLLLQQLPAAQITDPEERDASWEHVITLASTLTAEEMLGLDNQTILHRLYHEDPVRLFDAQPICFRCSCSRERSANALVSLGLEDAQQLVIEHNGSIEIDCQFCNERYLFDATDVAQLFAGGGVDSPSDTRH.

2 disulfide bridges follow: Cys235-Cys237 and Cys269-Cys272.

Belongs to the HSP33 family. Under oxidizing conditions two disulfide bonds are formed involving the reactive cysteines. Under reducing conditions zinc is bound to the reactive cysteines and the protein is inactive.

The protein resides in the cytoplasm. Its function is as follows. Redox regulated molecular chaperone. Protects both thermally unfolding and oxidatively damaged proteins from irreversible aggregation. Plays an important role in the bacterial defense system toward oxidative stress. The protein is 33 kDa chaperonin of Pseudomonas savastanoi pv. phaseolicola (strain 1448A / Race 6) (Pseudomonas syringae pv. phaseolicola (strain 1448A / Race 6)).